We begin with the raw amino-acid sequence, 299 residues long: 4-hydroxy-tetrahydrodipicolinate synthase (299 aa).

Threonine 44 contributes to the pyruvate binding site. Tyrosine 133 acts as the Proton donor/acceptor in catalysis. Lysine 162 serves as the catalytic Schiff-base intermediate with substrate. Pyruvate is bound at residue isoleucine 204.

Belongs to the DapA family. In terms of assembly, homotetramer; dimer of dimers.

Its subcellular location is the cytoplasm. It catalyses the reaction L-aspartate 4-semialdehyde + pyruvate = (2S,4S)-4-hydroxy-2,3,4,5-tetrahydrodipicolinate + H2O + H(+). The protein operates within amino-acid biosynthesis; L-lysine biosynthesis via DAP pathway; (S)-tetrahydrodipicolinate from L-aspartate: step 3/4. Its function is as follows. Catalyzes the condensation of (S)-aspartate-beta-semialdehyde [(S)-ASA] and pyruvate to 4-hydroxy-tetrahydrodipicolinate (HTPA). This chain is 4-hydroxy-tetrahydrodipicolinate synthase, found in Thermus thermophilus (strain ATCC 27634 / DSM 579 / HB8).